Consider the following 254-residue polypeptide: 7-cyano-7-deazaguanine synthase (254 aa).

Residue 30–40 (YSGGQDSATCL) participates in ATP binding. Zn(2+)-binding residues include Cys218, Cys233, Cys236, and Cys239.

The protein belongs to the QueC family. Zn(2+) serves as cofactor.

It catalyses the reaction 7-carboxy-7-deazaguanine + NH4(+) + ATP = 7-cyano-7-deazaguanine + ADP + phosphate + H2O + H(+). Its pathway is purine metabolism; 7-cyano-7-deazaguanine biosynthesis. Its function is as follows. Catalyzes the ATP-dependent conversion of 7-carboxy-7-deazaguanine (CDG) to 7-cyano-7-deazaguanine (preQ(0)). This chain is 7-cyano-7-deazaguanine synthase, found in Zymomonas mobilis subsp. mobilis (strain ATCC 31821 / ZM4 / CP4).